Here is a 669-residue protein sequence, read N- to C-terminus: Very long-chain fatty acid transport protein (669 aa).

The Cytoplasmic portion of the chain corresponds to 1 to 5 (MSPIQ). A helical membrane pass occupies residues 6-26 (VVVFALSRIFLLLFRLIKLII). The Extracellular portion of the chain corresponds to 27–148 (TPIQKSLGYL…YVAIDCTNKP (122 aa)). The chain crosses the membrane as a helical span at residues 149–169 (LFVFLWLSLWNIGAIPAFLNY). The Cytoplasmic portion of the chain corresponds to 170 to 270 (NTKGTPLVHS…TGLPKSAIMS (101 aa)). 256-267 (YTSGTTGLPKSA) contacts ATP. The stretch at 271 to 339 (WRKSSVGCQV…FWKQVYLTGA (69 aa)) is an intramembrane region. Residues 340–669 (THIQYVGEVC…EAIDAQTIKL (330 aa)) are Cytoplasmic-facing. Positions 501–551 (DAWYRCGDLLKADEYGLWYFLDRMGDTFRWKSENVSTTEVEDQLTASNKEQ) match the FACS motif. Positions 667–669 (IKL) match the C-terminal peroxisome targeting signal (PTS1) motif.

Belongs to the ATP-dependent AMP-binding enzyme family. As to quaternary structure, interacts with fatty acyl-CoA synthetases FAA1 and FAA4.

It is found in the lipid droplet. It localises to the cell membrane. Its subcellular location is the peroxisome membrane. The protein resides in the peroxisome. The catalysed reaction is a very long-chain fatty acid + ATP + CoA = a very long-chain fatty acyl-CoA + AMP + diphosphate. It carries out the reaction tetracosanoate + ATP + CoA = tetracosanoyl-CoA + AMP + diphosphate. In terms of biological role, acyl-CoA synthetase required for both the import of long chain fatty acids (LCFAs) (C14-C18) and the activation very long chain fatty acids (VLCFAs) (C20-C26) by esterification of the fatty acids into metabolically active CoA-thioesters for subsequent degradation or incorporation into phospholipids. The transport and fatty acyl-CoA synthetase activities are genetically separable and are thus independent activities. Esterifies VLCFAs in the peroxisome matrix. The VLCFAs are actively transported into peroxisomes by a PXA1-PXA2 heterodimeric transporter in the peroxisomal membrane. The sequence is that of Very long-chain fatty acid transport protein (FAT1) from Saccharomyces cerevisiae (strain ATCC 204508 / S288c) (Baker's yeast).